Here is a 369-residue protein sequence, read N- to C-terminus: UDP-3-O-acylglucosamine N-acyltransferase (369 aa).

H263 acts as the Proton acceptor in catalysis.

Belongs to the transferase hexapeptide repeat family. LpxD subfamily. In terms of assembly, homotrimer.

It carries out the reaction a UDP-3-O-[(3R)-3-hydroxyacyl]-alpha-D-glucosamine + a (3R)-hydroxyacyl-[ACP] = a UDP-2-N,3-O-bis[(3R)-3-hydroxyacyl]-alpha-D-glucosamine + holo-[ACP] + H(+). It functions in the pathway bacterial outer membrane biogenesis; LPS lipid A biosynthesis. Its function is as follows. Catalyzes the N-acylation of UDP-3-O-acylglucosamine using 3-hydroxyacyl-ACP as the acyl donor. Is involved in the biosynthesis of lipid A, a phosphorylated glycolipid that anchors the lipopolysaccharide to the outer membrane of the cell. The chain is UDP-3-O-acylglucosamine N-acyltransferase from Burkholderia ambifaria (strain MC40-6).